Here is a 122-residue protein sequence, read N- to C-terminus: Proximal tubules-expressed gene protein (122 aa).

Residues 33–53 (WLTGLIAMTVFLFLVLVVYVA) form a helical membrane-spanning segment.

The protein belongs to the PDZK1-interacting protein 1/SMIM24 family. In terms of tissue distribution, expressed in prospective pronephric mesoderm at the late gastrula stage. After neurulation, expressed in the intermediate mesoderm, eye placode and blood islands. Expression becomes restricted to the pronephric proximal tubule during embryogenesis, but is absent from the connecting tubules.

It localises to the membrane. Essential for pronephric tubule development, acting upstream of pax8 and lhx1/lim1 and downstream of retinoic acid signaling to induce pronephric mesoderm to form pronephric tubule-specific cells. The polypeptide is Proximal tubules-expressed gene protein (pteg) (Xenopus laevis (African clawed frog)).